Reading from the N-terminus, the 980-residue chain is Valine--tRNA ligase (980 aa).

The 'HIGH' region signature appears at 43-53 (PNVTGTLHMGH). The 'KMSKS' region motif lies at 586-590 (KMSKS). K589 serves as a coordination point for ATP. Residues 914 to 980 (LVDMDAERMR…AGLREQRGKL (67 aa)) adopt a coiled-coil conformation.

This sequence belongs to the class-I aminoacyl-tRNA synthetase family. ValS type 1 subfamily. As to quaternary structure, monomer.

It is found in the cytoplasm. It catalyses the reaction tRNA(Val) + L-valine + ATP = L-valyl-tRNA(Val) + AMP + diphosphate. Catalyzes the attachment of valine to tRNA(Val). As ValRS can inadvertently accommodate and process structurally similar amino acids such as threonine, to avoid such errors, it has a 'posttransfer' editing activity that hydrolyzes mischarged Thr-tRNA(Val) in a tRNA-dependent manner. The protein is Valine--tRNA ligase of Xanthomonas oryzae pv. oryzae (strain PXO99A).